Consider the following 157-residue polypeptide: SsrA-binding protein (157 aa).

Belongs to the SmpB family.

The protein resides in the cytoplasm. Its function is as follows. Required for rescue of stalled ribosomes mediated by trans-translation. Binds to transfer-messenger RNA (tmRNA), required for stable association of tmRNA with ribosomes. tmRNA and SmpB together mimic tRNA shape, replacing the anticodon stem-loop with SmpB. tmRNA is encoded by the ssrA gene; the 2 termini fold to resemble tRNA(Ala) and it encodes a 'tag peptide', a short internal open reading frame. During trans-translation Ala-aminoacylated tmRNA acts like a tRNA, entering the A-site of stalled ribosomes, displacing the stalled mRNA. The ribosome then switches to translate the ORF on the tmRNA; the nascent peptide is terminated with the 'tag peptide' encoded by the tmRNA and targeted for degradation. The ribosome is freed to recommence translation, which seems to be the essential function of trans-translation. This is SsrA-binding protein from Rhodococcus jostii (strain RHA1).